The primary structure comprises 270 residues: Bis(5'-nucleosyl)-tetraphosphatase, symmetrical (270 aa).

Belongs to the Ap4A hydrolase family.

The catalysed reaction is P(1),P(4)-bis(5'-adenosyl) tetraphosphate + H2O = 2 ADP + 2 H(+). In terms of biological role, hydrolyzes diadenosine 5',5'''-P1,P4-tetraphosphate to yield ADP. The polypeptide is Bis(5'-nucleosyl)-tetraphosphatase, symmetrical (Actinobacillus pleuropneumoniae serotype 5b (strain L20)).